An 88-amino-acid polypeptide reads, in one-letter code: UPF0298 protein BcerKBAB4_3759 (88 aa).

Belongs to the UPF0298 family.

It localises to the cytoplasm. The protein is UPF0298 protein BcerKBAB4_3759 of Bacillus mycoides (strain KBAB4) (Bacillus weihenstephanensis).